Consider the following 120-residue polypeptide: Transcription elongation factor SPT4 (120 aa).

The tract at residues 1–39 (MSASVPADLRNLRACLLCSLVKSVESFQKEGCENCEDVL) is interaction with spt-5. Residues 15 to 35 (CLLCSLVKSVESFQKEGCENC) form a C4-type zinc finger.

Belongs to the SPT4 family. As to quaternary structure, interacts with spt-5 to form DSIF. DSIF interacts with RNA polymerase II and with the positive transcription elongation factor b complex (P-TEFb complex), which is composed of cdk-9 and cyclin-T (cit-1.1 or cit-1.2).

The protein resides in the nucleus. Its function is as follows. May function as a component of the DRB sensitivity-inducing factor complex (DSIF complex), which regulates transcription elongation by RNA polymerase II. DSIF may enhance transcriptional pausing at sites proximal to the promoter, which may in turn facilitate the assembly of an elongation competent RNA polymerase II complex. The sequence is that of Transcription elongation factor SPT4 (spt-4) from Caenorhabditis elegans.